A 256-amino-acid chain; its full sequence is 2,3,4,5-tetrahydropyridine-2,6-dicarboxylate N-acetyltransferase (256 aa).

It belongs to the transferase hexapeptide repeat family. DapH subfamily.

It catalyses the reaction (S)-2,3,4,5-tetrahydrodipicolinate + acetyl-CoA + H2O = L-2-acetamido-6-oxoheptanedioate + CoA. It functions in the pathway amino-acid biosynthesis; L-lysine biosynthesis via DAP pathway; LL-2,6-diaminopimelate from (S)-tetrahydrodipicolinate (acetylase route): step 1/3. In terms of biological role, catalyzes the transfer of an acetyl group from acetyl-CoA to tetrahydrodipicolinate. The sequence is that of 2,3,4,5-tetrahydropyridine-2,6-dicarboxylate N-acetyltransferase from Lactococcus lactis subsp. cremoris (strain MG1363).